Here is a 366-residue protein sequence, read N- to C-terminus: Alanine racemase (366 aa).

The active-site Proton acceptor; specific for D-alanine is the lysine 40. Lysine 40 is subject to N6-(pyridoxal phosphate)lysine. A substrate-binding site is contributed by arginine 136. The Proton acceptor; specific for L-alanine role is filled by tyrosine 263. Methionine 310 lines the substrate pocket.

The protein belongs to the alanine racemase family. It depends on pyridoxal 5'-phosphate as a cofactor.

The enzyme catalyses L-alanine = D-alanine. It participates in amino-acid biosynthesis; D-alanine biosynthesis; D-alanine from L-alanine: step 1/1. Catalyzes the interconversion of L-alanine and D-alanine. May also act on other amino acids. The chain is Alanine racemase (alr) from Streptococcus agalactiae serotype Ia (strain ATCC 27591 / A909 / CDC SS700).